The chain runs to 366 residues: MPKHRKQSKIKIYRITSYKKDKRSELDSDKFELEQQDKHDIQDKQDKQDEQNKQDKQVQSENVTIVPTDSHSLDVWDEISLKEIQAGEHTSLFEEKSNYQNINLVQVNDVRLYLDKQLQFSSVDEQIYHEALVHPIMAKVIDPKRVLILGGGDGLALREVLKYETVLHVDLVDLDEAMINMARNVPEIVSLNKNAFFDNRVNVHVCDAKEFLNSPSSLYDVIIIDFPDPATELLSTLYTSELFARIATFLTEDGAFVCQSNSPADAPLVYWSIGNTIEHAGLTVKSYHTIVPSFGTDWGFHLATNSAHVLDQIEQLYVVPTPRTLPALLFPLFQFKEEHLEQRNLALLNSESNLILHQCYKQEMKF.

Residues 20 to 58 (KDKRSELDSDKFELEQQDKHDIQDKQDKQDEQNKQDKQV) are compositionally biased toward basic and acidic residues. The interval 20–61 (KDKRSELDSDKFELEQQDKHDIQDKQDKQDEQNKQDKQVQSE) is disordered. The PABS domain maps to 74–305 (DVWDEISLKE…TDWGFHLATN (232 aa)). Gln-100 contacts S-methyl-5'-thioadenosine. Spermidine contacts are provided by His-129 and Asp-153. S-methyl-5'-thioadenosine contacts are provided by residues Asp-173 and 207–208 (DA). The Proton acceptor role is filled by Asp-225.

The protein belongs to the spermidine/spermine synthase family. In terms of assembly, homodimer or homotetramer.

It localises to the cytoplasm. The enzyme catalyses S-adenosyl 3-(methylsulfanyl)propylamine + putrescine = S-methyl-5'-thioadenosine + spermidine + H(+). The protein operates within amine and polyamine biosynthesis; spermidine biosynthesis; spermidine from putrescine: step 1/1. Its function is as follows. Catalyzes the irreversible transfer of a propylamine group from the amino donor S-adenosylmethioninamine (decarboxy-AdoMet) to putrescine (1,4-diaminobutane) to yield spermidine. This is Polyamine aminopropyltransferase 2 from Bacillus cereus (strain ATCC 14579 / DSM 31 / CCUG 7414 / JCM 2152 / NBRC 15305 / NCIMB 9373 / NCTC 2599 / NRRL B-3711).